We begin with the raw amino-acid sequence, 75 residues long: Kappa-thalatoxin-Cad2a (75 aa).

The signal sequence occupies residues methionine 1–alanine 22. A propeptide spanning residues arginine 23 to arginine 40 is cleaved from the precursor. The ShKT domain occupies cysteine 43–cysteine 75. Disulfide bonds link cysteine 43-cysteine 75, cysteine 52-cysteine 68, and cysteine 57-cysteine 72.

It belongs to the sea anemone type 1 potassium channel toxin family. Type 1a subfamily.

The protein resides in the secreted. The protein localises to the nematocyst. In terms of biological role, inhibits voltage-gated potassium channels (Kv) with higher potency for Kv1.1/KCNA1 and Kv1.3/KCNA3. The polypeptide is Kappa-thalatoxin-Cad2a (Cryptodendrum adhaesivum (Adhesive sea anemone)).